Reading from the N-terminus, the 166-residue chain is NADH-ubiquinone oxidoreductase chain 6 (166 aa).

Helical transmembrane passes span 4–24 (FFSL…VVSA), 27–47 (QGVV…VFLG), 50–70 (FAAL…FGYC), 82–102 (VGGT…LLCL), 109–129 (LLVY…VGVF), and 135–155 (WGLI…LVIL).

It belongs to the complex I subunit 6 family.

It localises to the mitochondrion membrane. The catalysed reaction is a ubiquinone + NADH + 5 H(+)(in) = a ubiquinol + NAD(+) + 4 H(+)(out). Functionally, core subunit of the mitochondrial membrane respiratory chain NADH dehydrogenase (Complex I) that is believed to belong to the minimal assembly required for catalysis. Complex I functions in the transfer of electrons from NADH to the respiratory chain. The immediate electron acceptor for the enzyme is believed to be ubiquinone. The sequence is that of NADH-ubiquinone oxidoreductase chain 6 (MT-ND6) from Lycodon semicarinatus (Ryukyu odd-tooth snake).